Reading from the N-terminus, the 674-residue chain is Sterile alpha motif domain-containing protein 15 (674 aa).

Residues 1 to 18 (MAEVPEDYDSGPDEDGEL) show a composition bias toward acidic residues. The disordered stretch occupies residues 1-448 (MAEVPEDYDS…LEHREPKRGK (448 aa)). 3 stretches are compositionally biased toward basic and acidic residues: residues 87 to 142 (IAKE…EEAK), 195 to 223 (ESLR…KLGE), and 236 to 274 (TKPE…KSSE). Over residues 276–290 (AGLEPPEETQPEVPE) the composition is skewed to acidic residues. 4 stretches are compositionally biased toward basic and acidic residues: residues 291–322 (EMQR…KSTD), 330–346 (EEIK…KTNE), 354–372 (EMMK…EKKN), and 391–429 (VEEK…EPIK). The region spanning 545-608 (WDPEEVAEWI…SRHTQELLEI (64 aa)) is the SAM domain.

The polypeptide is Sterile alpha motif domain-containing protein 15 (SAMD15) (Homo sapiens (Human)).